A 262-amino-acid chain; its full sequence is Putative hydro-lyase BLi00500/BL02808 (262 aa).

This sequence belongs to the D-glutamate cyclase family.

The protein is Putative hydro-lyase BLi00500/BL02808 of Bacillus licheniformis (strain ATCC 14580 / DSM 13 / JCM 2505 / CCUG 7422 / NBRC 12200 / NCIMB 9375 / NCTC 10341 / NRRL NRS-1264 / Gibson 46).